A 282-amino-acid polypeptide reads, in one-letter code: uncharacterized protein (282 aa).

The HTH rpiR-type domain occupies 1 to 77 (MNGLLRIRQR…LALSEALASQ (77 aa)). Residues 37–56 (SQQLANEAGVSQSSVVKFAQ) constitute a DNA-binding region (H-T-H motif). Positions 125 to 265 (CVTMLRSARR…FIALIQQDLE (141 aa)) constitute an SIS domain.

This is an uncharacterized protein from Escherichia coli (strain K12).